Consider the following 254-residue polypeptide: Imidazole glycerol phosphate synthase subunit HisF (254 aa).

Active-site residues include aspartate 12 and aspartate 131.

It belongs to the HisA/HisF family. As to quaternary structure, heterodimer of HisH and HisF.

Its subcellular location is the cytoplasm. It carries out the reaction 5-[(5-phospho-1-deoxy-D-ribulos-1-ylimino)methylamino]-1-(5-phospho-beta-D-ribosyl)imidazole-4-carboxamide + L-glutamine = D-erythro-1-(imidazol-4-yl)glycerol 3-phosphate + 5-amino-1-(5-phospho-beta-D-ribosyl)imidazole-4-carboxamide + L-glutamate + H(+). Its pathway is amino-acid biosynthesis; L-histidine biosynthesis; L-histidine from 5-phospho-alpha-D-ribose 1-diphosphate: step 5/9. In terms of biological role, IGPS catalyzes the conversion of PRFAR and glutamine to IGP, AICAR and glutamate. The HisF subunit catalyzes the cyclization activity that produces IGP and AICAR from PRFAR using the ammonia provided by the HisH subunit. This chain is Imidazole glycerol phosphate synthase subunit HisF, found in Corynebacterium aurimucosum (strain ATCC 700975 / DSM 44827 / CIP 107346 / CN-1) (Corynebacterium nigricans).